A 319-amino-acid polypeptide reads, in one-letter code: MNLEMMQNSCVNFAFGGLLTAMLVYWSSLAFPRISGLNKLAALITLLVNIALALTLSSRWFANGYFPLSNLYESLLFLAWGLTFVHLFIESKTKSRLIGAVSIPVAMFVTAFASLALPIEMQKASPLVPALKSNWLMMHVSIMMISYSILILGSLLSILFLIITRGQDINLKGSSVGTGSYTVKSLDSNPSFAFSNPSGIVQEQSNMLINSTRMNLLESIDNLSYRIIGLGFPLLTIGIVAGAVWANEAWGSYWSWDPKETWALITWLIFAAYLHCRITKSWQGKRPAILASVGFLVVWICYLGVNFLGKGLHSYGWLA.

Helical transmembrane passes span 11–31, 34–54, 71–91, 97–117, 142–162, 227–247, 254–274, and 288–308; these read VNFA…SLAF, ISGL…ALAL, LYES…FIES, LIGA…SLAL, IMMI…LFLI, IIGL…VWAN, WSWD…AAYL, and AILA…VNFL.

This sequence belongs to the CcmF/CycK/Ccl1/NrfE/CcsA family. In terms of assembly, may interact with Ccs1.

The protein resides in the plastid. Its subcellular location is the chloroplast thylakoid membrane. Required during biogenesis of c-type cytochromes (cytochrome c6 and cytochrome f) at the step of heme attachment. In Porphyra purpurea (Red seaweed), this protein is Cytochrome c biogenesis protein CcsA.